Reading from the N-terminus, the 431-residue chain is MGIGLVRPAPEEEIQAMVEEISASNIEAIITKLVSFGTRHTLSQQNSSTYGIGAARDWIAAEMRRYAGDSEGRMSVVVQSYVQPVASRIPFPVRISNVVATVRGSEEPERVYVMTGHYDSRVTDVMDYTSDAPGANDDASGTAIAMELARILAKRRPRSTIILAAVAGEEQGLYGAGYLAGTLKNSSTNVEGMLNCDIVGSSTGDRGQRDPFTIRAFAQGPPSYESATVAARRLQIGGENDSPARELARFSAEVAANNVTGMNVAIIYRLDRFLRGGDHTPFLTAGYPAIRYTEPNENFDHQHQDLRTENGTVYGDLIEFVDFKYTARVGKVNLATLWSLSEAPGMPRNVTIDTTVLDNDTRLKWIVSNSTAVASYEVVWRSTTASLWTKMLDVGKVGEVTLPLSKDNMIFGVRSVGINSKKSPAVYPFPG.

N-linked (GlcNAc...) asparagine glycosylation occurs at asparagine 46. Positions 117, 137, and 170 each coordinate Zn(2+). Residue asparagine 185 is glycosylated (N-linked (GlcNAc...) asparagine). A Zn(2+)-binding site is contributed by aspartate 197. Asparagine 258, asparagine 310, asparagine 349, asparagine 359, and asparagine 369 each carry an N-linked (GlcNAc...) asparagine glycan. In terms of domain architecture, Fibronectin type-III spans 344 to 431 (PGMPRNVTID…KSPAVYPFPG (88 aa)).

This sequence belongs to the peptidase M28 family. M28B subfamily. Zn(2+) is required as a cofactor.

It is found in the secreted. The polypeptide is Probable zinc metalloprotease Lema_P086240 (Leptosphaeria maculans (strain JN3 / isolate v23.1.3 / race Av1-4-5-6-7-8) (Blackleg fungus)).